We begin with the raw amino-acid sequence, 386 residues long: Probable pectin lyase F (386 aa).

A signal peptide spans 1 to 16 (MKTAVLSLLLALQAYA). Cysteines 77 and 101 form a disulfide. A glycan (N-linked (GlcNAc...) asparagine) is linked at N124. Residue R251 is part of the active site. Residues C326 and C334 are joined by a disulfide bond.

It belongs to the polysaccharide lyase 1 family.

The protein localises to the secreted. The catalysed reaction is Eliminative cleavage of (1-&gt;4)-alpha-D-galacturonan methyl ester to give oligosaccharides with 4-deoxy-6-O-methyl-alpha-D-galact-4-enuronosyl groups at their non-reducing ends.. Its function is as follows. Pectinolytic enzymes consist of four classes of enzymes: pectin lyase, polygalacturonase, pectin methylesterase and rhamnogalacturonase. Among pectinolytic enzymes, pectin lyase is the most important in depolymerization of pectin, since it cleaves internal glycosidic bonds of highly methylated pectins. The chain is Probable pectin lyase F (pelF) from Neosartorya fischeri (strain ATCC 1020 / DSM 3700 / CBS 544.65 / FGSC A1164 / JCM 1740 / NRRL 181 / WB 181) (Aspergillus fischerianus).